Here is a 1427-residue protein sequence, read N- to C-terminus: MKMFQSFFSNYIDINFFRNATLDQCLLLFYLSLFSLTNLFLIQKLFHANHTQHPLKKYFGETCLLEYIQIILSIVSAALSFYLDTNAVWWAIRTITHLEIVGLNILSSLKYGSTLFSWISVANAFGLLLLRLISIYDFLTYSSWSFSVKGGSFLLLLPLAYNITLFLLVIIPLFFPRAWSPTVKFSKVARPSPEQTCSIFSLIFTYGWLNGIIWKSWKKPITLTDVPALPDTECTQIWYSRFAKNDRKSLMHTILLSLKSTILLMVFLSVLVSSTLFVTPLAIKKLLQYLQNPKSDEGNSPFLWVFVLLIGPYLASVVKELYVHVSRRFMLRIKAAITQMIYKKVLTSKTLFVAVDGSKINLDYVYNLLAKDVDNIGEMREFIGIIARAPLEMGVSMYFLYQLLGWSAYVGLLLAILSSSFPLLVASKISRLTSIANTSSDERIRLTTELLKSIKITKLFGWERPMLSRIQEKRSFEVNNMYSLTLFDIIFKSGMKIAPFISMFITFAIYTKIMGHQLTPATAFTSISMFGLLRYQFIWLASVSRQFIQFKVSLKRVDNFVYGNMVNDSSIESSDSFVFENTSLSWSPTPSTALFQLKNLNFTIPRNQFTLVVGSTGSGKSTLAMALLGELHVISGKMTTPSISQRIAYVPQAAWLRNGTIRSNILFGEPYDEERYFQIIKACCLDSDLNSMNDGDLTYIHSNGSSLSGGQKQRVSLARALYSNAEVYIFDDIFSALDVSTSRKIYESCFLSTLLQHKTIILFTHNVSLCLPIAENVIVLKNSTAQLVSPDSIQELVPSTFFSSNTKKDNIEEENLEPHSFSFDSTLASSSDNDEQRDFASNSSIVLLGLHYLKYFGSNKYILGSILLVMMSQVSLASIHFWIALWSGNSLFSLKLPSSFSFLWGYAILLFIYFLMDLSRAITFAKGGRTASENIHDILSERVLYSPLHWFEKTAAGRILNRFSKDMYATDNLLWASLEGMLLCVMAILITMLNVTLVMPIFMVPAAFVSLLVYLHGYAYSKAQKQLTSLQSSRTSPVFTMLGETLGGITVIRAFKKEKIFEHENMAFIDDMIQPLYISFAINRWLAIRTDGISGLVGFSTGLIALLRQNIPPGLVGFSLNSAIGFNISVLVFVRANNEILTYINNFRRLYEYMLLPSEKNESSCLTKPMNKEWPTLGHVSIKNLTVSYSIGQAAVLEDINLEILPKEKIAIVGRTGSGKSTMGLTLLRFTMIMSGAVEVDGIDINSLDLEVLRQRISLIPQDPVLISGTVRSNLDPFEEYGDGELNEILKTASCESLVQASNKNSLDAFAIHLDTPVDSGGVNFSSGQRQILALARALVRKSRIVILDESTASVDDTTDRRIQQMLRAAFKHATVLCIAHRIKTIVDYDKVLVLDSGKTVEFGSPKSLYTQRRAFWKMCKESHISL.

The helical transmembrane segment at 26-46 threads the bilayer; it reads LLLFYLSLFSLTNLFLIQKLF. The N-linked (GlcNAc...) asparagine glycan is linked to Asn-49. A run of 9 helical transmembrane segments spans residues 63-83, 87-107, 115-135, 155-175, 197-217, 262-282, 298-318, 345-367, and 397-417; these read CLLE…SFYL, AVWW…NILS, LFSW…LISI, LLLP…PLFF, CSIF…WKSW, ILLM…TPLA, GNSP…ASVV, VLTS…YVYN, and MYFL…LAIL. The 288-residue stretch at 262–549 folds into the ABC transmembrane type-1 1 domain; it reads ILLMVFLSVL…LASVSRQFIQ (288 aa). An N-linked (GlcNAc...) asparagine glycan is attached at Asn-437. The next 2 helical transmembrane spans lie at 489–509 and 513–533; these read IIFK…TFAI and IMGH…FGLL. 3 N-linked (GlcNAc...) asparagine glycosylation sites follow: Asn-567, Asn-581, and Asn-601. The ABC transporter 1 domain maps to 579 to 807; the sequence is FENTSLSWSP…PSTFFSSNTK (229 aa). The chain crosses the membrane as a helical span at residues 609–629; sequence FTLVVGSTGSGKSTLAMALLG. 614 to 621 contributes to the ATP binding site; the sequence is GSTGSGKS. N-linked (GlcNAc...) asparagine glycosylation is found at Asn-658 and Asn-703. Residues 760-780 traverse the membrane as a helical segment; it reads IILFTHNVSLCLPIAENVIVL. Asn-782 and Asn-842 each carry an N-linked (GlcNAc...) asparagine glycan. The 281-residue stretch at 862 to 1142 folds into the ABC transmembrane type-1 2 domain; the sequence is ILGSILLVMM…FVRANNEILT (281 aa). 3 helical membrane-spanning segments follow: residues 866-886, 896-916, and 973-993; these read ILLV…IALW, LPSS…YFLM, and LLWA…ITML. N-linked (GlcNAc...) asparagine glycosylation occurs at Asn-994. 3 helical membrane passes run 995 to 1015, 1086 to 1106, and 1114 to 1134; these read VTLV…LVYL, LAIR…LIAL, and GLVG…LVFV. 2 N-linked (GlcNAc...) asparagine glycosylation sites follow: Asn-1161 and Asn-1184. The 243-residue stretch at 1180 to 1422 folds into the ABC transporter 2 domain; that stretch reads VSIKNLTVSY…RRAFWKMCKE (243 aa). ATP is bound at residue 1214–1221; the sequence is GRTGSGKS. Residues 1223–1243 form a helical membrane-spanning segment; sequence MGLTLLRFTMIMSGAVEVDGI. Asn-1324 carries an N-linked (GlcNAc...) asparagine glycan.

This sequence belongs to the ABC transporter superfamily. ABCC family. Conjugate transporter (TC 3.A.1.208) subfamily.

The protein resides in the membrane. The chain is ATP-binding cassette transporter abc1 (abc1) from Schizosaccharomyces pombe (strain 972 / ATCC 24843) (Fission yeast).